Here is a 248-residue protein sequence, read N- to C-terminus: Large ribosomal subunit protein uL4 (248 aa).

Disordered stretches follow at residues 48-96 (GTHK…PVPR) and 210-248 (AFSEDRDNPGTSLPKSPTPEDSSDATKARSSRHDDRTGA). The span at 233–248 (DATKARSSRHDDRTGA) shows a compositional bias: basic and acidic residues.

Belongs to the universal ribosomal protein uL4 family. As to quaternary structure, part of the 50S ribosomal subunit.

Functionally, one of the primary rRNA binding proteins, this protein initially binds near the 5'-end of the 23S rRNA. It is important during the early stages of 50S assembly. It makes multiple contacts with different domains of the 23S rRNA in the assembled 50S subunit and ribosome. In terms of biological role, forms part of the polypeptide exit tunnel. The sequence is that of Large ribosomal subunit protein uL4 from Tropheryma whipplei (strain Twist) (Whipple's bacillus).